The primary structure comprises 401 residues: Pyruvyl transferase 1 (401 aa).

Residues 1–30 (MFANINIRKSVWLFLLAAVSCTLFIYGVTR) form the signal peptide. The segment at 38–64 (NPSSLTSPSSSTSVDKKKPLFTKSPRN) is disordered. Residues 39-50 (PSSLTSPSSSTS) show a composition bias toward low complexity.

This sequence belongs to the polysaccharide pyruvyl transferase family.

Its function is as follows. Involved in cell wall biogenesis. Has a role in the addition of Gal-beta1,3 moieties to galactomannans and their subsequent pyruvylation. This is Pyruvyl transferase 1 (pvg1) from Schizosaccharomyces pombe (strain 972 / ATCC 24843) (Fission yeast).